The primary structure comprises 288 residues: ATP synthase gamma chain (288 aa).

The protein belongs to the ATPase gamma chain family. As to quaternary structure, F-type ATPases have 2 components, CF(1) - the catalytic core - and CF(0) - the membrane proton channel. CF(1) has five subunits: alpha(3), beta(3), gamma(1), delta(1), epsilon(1). CF(0) has three main subunits: a, b and c.

It is found in the cell inner membrane. Produces ATP from ADP in the presence of a proton gradient across the membrane. The gamma chain is believed to be important in regulating ATPase activity and the flow of protons through the CF(0) complex. In Blochmanniella pennsylvanica (strain BPEN), this protein is ATP synthase gamma chain.